The sequence spans 287 residues: Acetylglutamate kinase (287 aa).

Substrate is bound by residues 64–65, Arg-86, and Asn-181; that span reads GG.

This sequence belongs to the acetylglutamate kinase family. ArgB subfamily.

Its subcellular location is the cytoplasm. The enzyme catalyses N-acetyl-L-glutamate + ATP = N-acetyl-L-glutamyl 5-phosphate + ADP. It functions in the pathway amino-acid biosynthesis; L-arginine biosynthesis; N(2)-acetyl-L-ornithine from L-glutamate: step 2/4. In terms of biological role, catalyzes the ATP-dependent phosphorylation of N-acetyl-L-glutamate. The polypeptide is Acetylglutamate kinase (Desulforamulus reducens (strain ATCC BAA-1160 / DSM 100696 / MI-1) (Desulfotomaculum reducens)).